Here is a 296-residue protein sequence, read N- to C-terminus: Phosphatidylcholine:diacylglycerol cholinephosphotransferase 2 (296 aa).

The next 5 helical transmembrane spans lie at 83-103 (HWIP…EYTF), 136-156 (VLAA…GCTW), 165-182 (TIAA…GYST), 198-218 (PVGN…SMIA), and 250-270 (GHYT…DSLA). Residues histidine 211, histidine 251, and aspartate 255 contribute to the active site.

Belongs to the phosphatidylcholine:diacylglycerol cholinephosphotransferase family.

The protein localises to the membrane. Functions as a phosphatidylcholine:diacylglycerol cholinephosphotransferase that catalyzes the transfer of the phosphocholine headgroup from phosphatidylcholine (PC) to diacylglycerol, a major reaction for the transfer of 18:1 into phosphatidylcholine for desaturation and also for the reverse transfer of 18:2 and 18:3 into the triacylglycerols synthesis pathway. The protein is Phosphatidylcholine:diacylglycerol cholinephosphotransferase 2 of Arabidopsis thaliana (Mouse-ear cress).